Here is a 397-residue protein sequence, read N- to C-terminus: Succinyl-diaminopimelate desuccinylase (397 aa).

Histidine 73 contributes to the Zn(2+) binding site. The active site involves aspartate 75. Aspartate 106 is a binding site for Zn(2+). Residue glutamate 140 is the Proton acceptor of the active site. Residues glutamate 141, glutamate 169, and histidine 366 each contribute to the Zn(2+) site.

It belongs to the peptidase M20A family. DapE subfamily. As to quaternary structure, homodimer. The cofactor is Zn(2+). Requires Co(2+) as cofactor.

It catalyses the reaction N-succinyl-(2S,6S)-2,6-diaminopimelate + H2O = (2S,6S)-2,6-diaminopimelate + succinate. It participates in amino-acid biosynthesis; L-lysine biosynthesis via DAP pathway; LL-2,6-diaminopimelate from (S)-tetrahydrodipicolinate (succinylase route): step 3/3. Functionally, catalyzes the hydrolysis of N-succinyl-L,L-diaminopimelic acid (SDAP), forming succinate and LL-2,6-diaminopimelate (DAP), an intermediate involved in the bacterial biosynthesis of lysine and meso-diaminopimelic acid, an essential component of bacterial cell walls. In Rhizobium johnstonii (strain DSM 114642 / LMG 32736 / 3841) (Rhizobium leguminosarum bv. viciae), this protein is Succinyl-diaminopimelate desuccinylase.